The primary structure comprises 384 residues: Prostaglandin E synthase 2 (384 aa).

Over 1 to 56 the chain is Lumenal; sequence MAQAARLSWVLVSSRCALTEGLLTRPWQPLSAQSRAGFTRVAAGSRGAAVRKGSPR. A helical transmembrane segment spans residues 57–73; sequence LLGAAALALGGALGLYH. Residues 74–384 lie on the Cytoplasmic side of the membrane; sequence TVRWHQRSQD…VHHVNPSCKD (311 aa). The region spanning 89-192 is the Glutaredoxin domain; the sequence is SAAQLPLSNS…EVITYYPPMK (104 aa). Glutathione contacts are provided by residues valine 147 and 163–164; that span reads DS. In terms of domain architecture, GST C-terminal spans 262–376; it reads YIVREGKFGA…RAIEEAPSVH (115 aa).

Belongs to the GST superfamily. Homodimer. Interacts with EXOSC10. May interact with CEBPB. In terms of processing, synthesized as a Golgi membrane-associated protein, and the proteolytic removal of the N-terminal hydrophobic domain leads to the formation of a mature cytosolic enzyme. Widely expressed. Expressed in brain, heart, liver, colon and lung.

Its subcellular location is the golgi apparatus membrane. It is found in the nucleus. It localises to the cytoplasm. The catalysed reaction is prostaglandin H2 = prostaglandin E2. The enzyme catalyses prostaglandin H2 = (12S)-hydroxy-(5Z,8E,10E)-heptadecatrienoate + malonaldehyde. It participates in lipid metabolism; prostaglandin biosynthesis. With respect to regulation, isomerase activity is increased by sulfhydril compounds. Dithiothreitol (DTT) is most effective, followed by glutathione (GSH) and 2-mercaptoethanol. In terms of biological role, isomerase that catalyzes the conversion of PGH2 into the more stable prostaglandin E2 (PGE2) (in vitro). The biological function and the GSH-dependent property of PTGES2 is still under debate. In vivo, PTGES2 could form a complex with GSH and heme and would not participate in PGE2 synthesis but would catalyze the degradation of prostaglandin E2 H2 (PGH2) to 12(S)-hydroxy-5(Z),8(E),10(E)-heptadecatrienoic acid (HHT) and malondialdehyde (MDA). May also have transactivation activity toward IFN-gamma (IFNG), possibly via an interaction with CEBPB; however, the relevance of transcription activation activity remains unclear. The chain is Prostaglandin E synthase 2 (Ptges2) from Mus musculus (Mouse).